The following is a 328-amino-acid chain: Ethanol acetyltransferase 1 (328 aa).

Positions 39-309 (PAIINIHGLL…TGHNLLLENP (271 aa)) constitute an AB hydrolase-1 domain. Active-site charge relay system residues include serine 115, aspartate 139, and histidine 302.

This sequence belongs to the AB hydrolase superfamily.

It localises to the mitochondrion. The catalysed reaction is ethanol + acetyl-CoA = ethyl acetate + CoA. It carries out the reaction acetyl-CoA + H2O = acetate + CoA + H(+). The enzyme catalyses ethyl acetate + H2O = ethanol + acetate + H(+). In terms of biological role, alcohol acetyltransferase that catalyzes the synthesis of ethyl acetate from ethanol and acetyl-CoA. Can also function as a thioesterase by hydrolyzing acetyl-CoA in the absence of ethanol, as well as esterase hydrolyzing ethyl acetate. The polypeptide is Ethanol acetyltransferase 1 (Saccharomyces cerevisiae (strain ATCC 204508 / S288c) (Baker's yeast)).